Here is a 621-residue protein sequence, read N- to C-terminus: 1-deoxy-D-xylulose-5-phosphate synthase (621 aa).

Residues histidine 80 and 121-123 contribute to the thiamine diphosphate site; that span reads GHS. Position 152 (aspartate 152) interacts with Mg(2+). Thiamine diphosphate contacts are provided by residues 153-154, asparagine 181, tyrosine 288, and glutamate 370; that span reads GA. Mg(2+) is bound at residue asparagine 181.

This sequence belongs to the transketolase family. DXPS subfamily. As to quaternary structure, homodimer. Mg(2+) serves as cofactor. It depends on thiamine diphosphate as a cofactor.

The enzyme catalyses D-glyceraldehyde 3-phosphate + pyruvate + H(+) = 1-deoxy-D-xylulose 5-phosphate + CO2. Its pathway is metabolic intermediate biosynthesis; 1-deoxy-D-xylulose 5-phosphate biosynthesis; 1-deoxy-D-xylulose 5-phosphate from D-glyceraldehyde 3-phosphate and pyruvate: step 1/1. Its function is as follows. Catalyzes the acyloin condensation reaction between C atoms 2 and 3 of pyruvate and glyceraldehyde 3-phosphate to yield 1-deoxy-D-xylulose-5-phosphate (DXP). The chain is 1-deoxy-D-xylulose-5-phosphate synthase from Vibrio campbellii (strain ATCC BAA-1116).